A 178-amino-acid chain; its full sequence is ATP-dependent protease subunit HslV (178 aa).

The active site involves threonine 7. Na(+) contacts are provided by glycine 162, cysteine 165, and threonine 168.

The protein belongs to the peptidase T1B family. HslV subfamily. As to quaternary structure, a double ring-shaped homohexamer of HslV is capped on each side by a ring-shaped HslU homohexamer. The assembly of the HslU/HslV complex is dependent on binding of ATP.

Its subcellular location is the cytoplasm. The enzyme catalyses ATP-dependent cleavage of peptide bonds with broad specificity.. With respect to regulation, allosterically activated by HslU binding. Its function is as follows. Protease subunit of a proteasome-like degradation complex believed to be a general protein degrading machinery. The polypeptide is ATP-dependent protease subunit HslV (Azoarcus sp. (strain BH72)).